The following is a 175-amino-acid chain: MSIVKVRNIFLIGPMGAGKSTIGRALAKELKLEFYDSDEVIEERAGADISWIFDIEGEEGFRRREQKVIDELTQKTNIVLATGGGVVITPENRNALAGRGTVIYLKTSLQQQFERTKRDTKRPLLQTEDLEGRLESLRDEREPFYDELADVSFETDKLTVKAVANNIIKYLYGEV.

16 to 21 (GAGKST) contacts ATP. Residue serine 20 coordinates Mg(2+). Positions 38, 62, and 84 each coordinate substrate. Arginine 122 contacts ATP. Arginine 141 lines the substrate pocket.

It belongs to the shikimate kinase family. As to quaternary structure, monomer. Requires Mg(2+) as cofactor.

The protein localises to the cytoplasm. The enzyme catalyses shikimate + ATP = 3-phosphoshikimate + ADP + H(+). The protein operates within metabolic intermediate biosynthesis; chorismate biosynthesis; chorismate from D-erythrose 4-phosphate and phosphoenolpyruvate: step 5/7. In terms of biological role, catalyzes the specific phosphorylation of the 3-hydroxyl group of shikimic acid using ATP as a cosubstrate. This is Shikimate kinase from Legionella pneumophila (strain Paris).